We begin with the raw amino-acid sequence, 219 residues long: 7-cyano-7-deazaguanine synthase (219 aa).

10 to 20 (FSGGQDSTTCL) serves as a coordination point for ATP. Zn(2+) is bound by residues C186, C195, C198, and C201.

This sequence belongs to the QueC family. As to quaternary structure, homodimer. Requires Zn(2+) as cofactor.

It carries out the reaction 7-carboxy-7-deazaguanine + NH4(+) + ATP = 7-cyano-7-deazaguanine + ADP + phosphate + H2O + H(+). It participates in purine metabolism; 7-cyano-7-deazaguanine biosynthesis. Its function is as follows. Catalyzes the ATP-dependent conversion of 7-carboxy-7-deazaguanine (CDG) to 7-cyano-7-deazaguanine (preQ(0)). The protein is 7-cyano-7-deazaguanine synthase of Bacillus licheniformis (strain ATCC 14580 / DSM 13 / JCM 2505 / CCUG 7422 / NBRC 12200 / NCIMB 9375 / NCTC 10341 / NRRL NRS-1264 / Gibson 46).